The following is a 328-amino-acid chain: C-type lectin domain family 11 member A (328 aa).

The first 21 residues, 1–21 (MQAAWLLGALLVPHLLSFGHG), serve as a signal peptide directing secretion. Positions 58 to 111 (PTGVGNKDNLAENSEGKEVWEATETQGEEEEEETTTTPSSSPTPFPSPSPTSED) are disordered. Residues 188 to 325 (LGHKCFLLSR…CERRLYFVCE (138 aa)) enclose the C-type lectin domain. 2 disulfide bridges follow: C209–C324 and C301–C316.

Post-translationally, O-glycosylated. Probably sulfated on the O-glycans.

The protein localises to the cytoplasm. Its subcellular location is the secreted. Promotes osteogenesis by stimulating the differentiation of mesenchymal progenitors into mature osteoblasts. Important for repair and maintenance of adult bone. The chain is C-type lectin domain family 11 member A (Clec11a) from Rattus norvegicus (Rat).